Here is a 254-residue protein sequence, read N- to C-terminus: Glucosamine-6-phosphate deaminase (254 aa).

The Proton acceptor; for enolization step role is filled by Asp67. Asn136 acts as the For ring-opening step in catalysis. The active-site Proton acceptor; for ring-opening step is the His138. Glu143 (for ring-opening step) is an active-site residue.

This sequence belongs to the glucosamine/galactosamine-6-phosphate isomerase family. NagB subfamily.

The catalysed reaction is alpha-D-glucosamine 6-phosphate + H2O = beta-D-fructose 6-phosphate + NH4(+). The protein operates within amino-sugar metabolism; N-acetylneuraminate degradation; D-fructose 6-phosphate from N-acetylneuraminate: step 5/5. Its function is as follows. Catalyzes the reversible isomerization-deamination of glucosamine 6-phosphate (GlcN6P) to form fructose 6-phosphate (Fru6P) and ammonium ion. The chain is Glucosamine-6-phosphate deaminase from Brevibacillus brevis (strain 47 / JCM 6285 / NBRC 100599).